The chain runs to 261 residues: MAESHLQSSLITASQFFEIWLHFDADGSGYLEGKELQNLIQELQQARKKAGLELSPEMKTFVDQYGQRDDGKIGIVELAHVLPTEENFLLLFRCQQLKSCEEFMKTWRKYDTDHGGFIETEELKNFLKDLLEKANKTVDDTKLAEYTDLMLKLFDSNNDGKLELTEMARLLPVQENFLLKFQGIKMCGKEFNKAFELYDQDGNGYIDENELDALLKDLCEKNKQDLDINNITTYKKNIMALSDGGKLYRTDLALILCAGDN.

N-acetylalanine is present on A2. The interval A2–Q7 is interaction with RANBP9. 5 EF-hand domains span residues I11–A46, E53–F88, K98–K133, K142–F177, and M186–K221. Ca(2+) is bound by residues D24, D26, S28, Y30, and E35. 13 residues coordinate Ca(2+): D111, D113, E122, D155, N157, D159, K161, E166, D199, D201, N203, Y205, and E210.

The protein belongs to the calbindin family. Interacts with RANBP9.

Buffers cytosolic calcium. May stimulate a membrane Ca(2+)-ATPase and a 3',5'-cyclic nucleotide phosphodiesterase. The protein is Calbindin (CALB1) of Pongo abelii (Sumatran orangutan).